Consider the following 286-residue polypeptide: Aldo-keto reductase MAP_4149 (286 aa).

The active-site Proton donor is Tyr-61. NADPH contacts are provided by Leu-201, Val-203, Val-239, Arg-241, Ser-242, Arg-247, and Asn-251.

It belongs to the aldo/keto reductase family.

This chain is Aldo-keto reductase MAP_4149, found in Mycolicibacterium paratuberculosis (strain ATCC BAA-968 / K-10) (Mycobacterium paratuberculosis).